Consider the following 166-residue polypeptide: Cyclic pyranopterin monophosphate synthase (166 aa).

Residues 83-85 (LCH) and 121-122 (ME) each bind substrate. Asp-136 is a catalytic residue.

Belongs to the MoaC family. In terms of assembly, homohexamer; trimer of dimers.

It catalyses the reaction (8S)-3',8-cyclo-7,8-dihydroguanosine 5'-triphosphate = cyclic pyranopterin phosphate + diphosphate. Its pathway is cofactor biosynthesis; molybdopterin biosynthesis. Functionally, catalyzes the conversion of (8S)-3',8-cyclo-7,8-dihydroguanosine 5'-triphosphate to cyclic pyranopterin monophosphate (cPMP). In Rhodospirillum rubrum (strain ATCC 11170 / ATH 1.1.1 / DSM 467 / LMG 4362 / NCIMB 8255 / S1), this protein is Cyclic pyranopterin monophosphate synthase.